The sequence spans 237 residues: Sugar fermentation stimulation protein homolog (237 aa).

Belongs to the SfsA family.

The polypeptide is Sugar fermentation stimulation protein homolog (Pseudomonas putida (strain ATCC 700007 / DSM 6899 / JCM 31910 / BCRC 17059 / LMG 24140 / F1)).